Here is a 99-residue protein sequence, read N- to C-terminus: NADH-quinone oxidoreductase subunit K (99 aa).

A run of 3 helical transmembrane segments spans residues P3–L23, I28–F48, and F62–I82.

It belongs to the complex I subunit 4L family. As to quaternary structure, NDH-1 is composed of 14 different subunits. Subunits NuoA, H, J, K, L, M, N constitute the membrane sector of the complex.

The protein resides in the cell membrane. The catalysed reaction is a quinone + NADH + 5 H(+)(in) = a quinol + NAD(+) + 4 H(+)(out). Its function is as follows. NDH-1 shuttles electrons from NADH, via FMN and iron-sulfur (Fe-S) centers, to quinones in the respiratory chain. The immediate electron acceptor for the enzyme in this species is believed to be a menaquinone. Couples the redox reaction to proton translocation (for every two electrons transferred, four hydrogen ions are translocated across the cytoplasmic membrane), and thus conserves the redox energy in a proton gradient. The polypeptide is NADH-quinone oxidoreductase subunit K (Rhodococcus erythropolis (strain PR4 / NBRC 100887)).